Here is a 313-residue protein sequence, read N- to C-terminus: tRNA dimethylallyltransferase (313 aa).

An ATP-binding site is contributed by 10–17 (GPTASGKT). 12–17 (TASGKT) contributes to the substrate binding site. 3 interaction with substrate tRNA regions span residues 35-38 (DSAM), 159-163 (QRIQR), and 240-245 (RCVGYR).

It belongs to the IPP transferase family. As to quaternary structure, monomer. Mg(2+) serves as cofactor.

It carries out the reaction adenosine(37) in tRNA + dimethylallyl diphosphate = N(6)-dimethylallyladenosine(37) in tRNA + diphosphate. Its function is as follows. Catalyzes the transfer of a dimethylallyl group onto the adenine at position 37 in tRNAs that read codons beginning with uridine, leading to the formation of N6-(dimethylallyl)adenosine (i(6)A). This is tRNA dimethylallyltransferase from Legionella pneumophila subsp. pneumophila (strain Philadelphia 1 / ATCC 33152 / DSM 7513).